Here is a 909-residue protein sequence, read N- to C-terminus: Ribosome-releasing factor 2, mitochondrial (909 aa).

Residues Met-1–Leu-15 constitute a mitochondrion transit peptide. The 311-residue stretch at Asp-57–Pro-367 folds into the tr-type G domain. Ala-66 to Thr-73 serves as a coordination point for GTP. Residues Trp-121–Asn-148 form a disordered region. Residues Gly-127–Asn-148 are compositionally biased toward polar residues. Residues Asp-151 to His-155 and Asn-205 to Asp-208 contribute to the GTP site.

Belongs to the TRAFAC class translation factor GTPase superfamily. Classic translation factor GTPase family. EF-G/EF-2 subfamily.

The protein localises to the mitochondrion. Mitochondrial GTPase that mediates the disassembly of ribosomes from messenger RNA at the termination of mitochondrial protein biosynthesis. Not involved in the GTP-dependent ribosomal translocation step during translation elongation. This Aspergillus flavus (strain ATCC 200026 / FGSC A1120 / IAM 13836 / NRRL 3357 / JCM 12722 / SRRC 167) protein is Ribosome-releasing factor 2, mitochondrial (mef2).